A 61-amino-acid polypeptide reads, in one-letter code: Metallothionein-1B (61 aa).

A beta region spans residues 1-29 (MDPNCSCVAGESCTCAGSCKCKQCRCASC). 20 residues coordinate a divalent metal cation: Cys-5, Cys-7, Cys-13, Cys-15, Cys-19, Cys-21, Cys-24, Cys-26, Cys-29, Cys-33, Cys-34, Cys-36, Cys-37, Cys-41, Cys-44, Cys-48, Cys-50, Cys-57, Cys-59, and Cys-60. Residues 30-61 (KKSCCSCCPVGCAKCAQGCVCKGASDKCSCCA) are alpha.

The protein belongs to the metallothionein superfamily. Type 1 family.

Its function is as follows. Metallothioneins have a high content of cysteine residues that bind various heavy metals; these proteins are transcriptionally regulated by both heavy metals and glucocorticoids. The polypeptide is Metallothionein-1B (Equus caballus (Horse)).